The primary structure comprises 119 residues: Large ribosomal subunit protein bL19 (119 aa).

Belongs to the bacterial ribosomal protein bL19 family.

Functionally, this protein is located at the 30S-50S ribosomal subunit interface and may play a role in the structure and function of the aminoacyl-tRNA binding site. This chain is Large ribosomal subunit protein bL19, found in Saccharopolyspora erythraea (strain ATCC 11635 / DSM 40517 / JCM 4748 / NBRC 13426 / NCIMB 8594 / NRRL 2338).